Here is a 1758-residue protein sequence, read N- to C-terminus: Condensin-2 complex subunit hcp-6 (1758 aa).

Disordered stretches follow at residues 428-501 (DPGA…KAKE), 969-1008 (ENGS…KGGM), 1379-1460 (QKRL…ARLL), and 1500-1656 (SKQA…LSRG). Acidic residues predominate over residues 438–462 (EQNEEEDEEEEGEDEEEEEENEQDD). Positions 463–473 (VAVKEEEQSDK) are enriched in basic and acidic residues. The span at 474–484 (SDEENDGDNEE) shows a compositional bias: acidic residues. Over residues 485–501 (NVSKKKEEKKKEKKAKE) the composition is skewed to basic and acidic residues. Residues 969 to 979 (ENGSSDASTVN) show a composition bias toward polar residues. A compositionally biased stretch (low complexity) spans 999-1008 (SSQKSSKGGM). Positions 1326-1385 (CIEHKNDIDEILQDNRQLKDEMMFELQRVKQRTEEANRILDEYLKRVAEFKKQQKRLSKS) form a coiled coil. The segment covering 1414 to 1423 (EDQENVEEEV) has biased composition (acidic residues). Basic and acidic residues-rich tracts occupy residues 1424 to 1437 (EMRT…DADV) and 1500 to 1512 (SKQA…KTIV). Polar residues-rich tracts occupy residues 1602–1618 (ISAN…QSTE) and 1640–1651 (VPTSSSGNTEND).

In terms of assembly, component of the condensin-2 complex.

The protein resides in the nucleus. The protein localises to the chromosome. Its subcellular location is the centromere. Functionally, chromosomal protein which is recruited to mitotic chromosomes by hcp-3 (CENP-A) and hcp-4 (CENP-C). Involved in chromosome segregation during mitosis, playing a role in chromosome condensation and in maintaining chromosome morphology, rigidity and orientation during mitosis. In Caenorhabditis elegans, this protein is Condensin-2 complex subunit hcp-6.